An 821-amino-acid chain; its full sequence is Calpain-3 (821 aa).

Residues 1–34 (MPTVISASMAPRTGASQVPRTMPQAAQGKGTEAG) form a disordered region. A Calpain catalytic domain is found at 73–417 (LYLDPEFPPD…FTKLEICNLT (345 aa)). Residues Cys128, His334, and Asn358 contribute to the active site. The segment at 418-586 (ADALESDKLQ…KRNLSEEVEN (169 aa)) is domain III. A linker region spans residues 587–649 (TISVDRPVRK…EPSNTDQESE (63 aa)). The interval 603–652 (IFVSDRANSNKELGVDQESEEGQDKTSPDKQEKSPKPEPSNTDQESEEQQ) is disordered. The segment covering 624–638 (GQDKTSPDKQEKSPK) has biased composition (basic and acidic residues). Residues 641-652 (PSNTDQESEEQQ) show a composition bias toward polar residues. EF-hand domains lie at 649 to 683 (EEQQ…VVNK), 692 to 725 (FTLE…KKIK), 722 to 757 (KKIK…AGFH), and 787 to 821 (VRLE…TMYA). The segment at 650 to 821 (EQQQFRNIFR…LEWLQLTMYA (172 aa)) is domain IV. Ca(2+) contacts are provided by Ala662, Asp665, Glu667, Glu672, Asp705, Asp707, Ser709, Arg711, Glu716, Asp735, Asp737, Ser739, Thr741, Glu746, Asp800, Asp802, Asp804, and Ile806.

It belongs to the peptidase C2 family. As to quaternary structure, homodimer; via EF-hand domain 4. Interacts with TTN/titin. Interacts with CMYA5; this interaction, which results in CMYA5 proteolysis, may protect CAPN3 from autolysis. Interacts with SIMC1. Interacts with UTP25; the interaction is required for CAPN3 translocation to the nucleolus. As to expression, skeletal muscle.

The protein resides in the cytoplasm. The protein localises to the nucleus. Its subcellular location is the nucleolus. It carries out the reaction Broad endopeptidase activity.. Its activity is regulated as follows. Activated by micromolar concentrations of calcium and inhibited by calpastatin. Its function is as follows. Calcium-regulated non-lysosomal thiol-protease. Proteolytically cleaves CTBP1. Mediates, with UTP25, the proteasome-independent degradation of p53/TP53. This chain is Calpain-3 (CAPN3), found in Sus scrofa (Pig).